The primary structure comprises 364 residues: MMDPAATSFWATPVGWTLVTAGQILAVMIWILLSLAFLLLADRKIWAGVQMRKGPNVVGPFGLLQSFADFLKFVLKEIVIPSGADKTVFLLAPLISFTLAFAAWAVIPLAPGWVVSDINVGILYLFAISSLGVYGIIMGGWASNSKYPFLGSLRSAAQMVSYEVSIGFIIITVILLAGSMNLQQIVASQTGGFWNWYVFGGPGGLAKLPLLLVMVPMAVIFFISGLAETNRPPFDLPEAESELVAGYQVEYSSTPYLLFMIGEYANIVLICAMTTILFFGGWSAPFPSDFTDSWAPTAASFYYFMWFFLKVIFFFFLVSMAKAIVPRYRYDQLMRLGWKVFLPFSLVCVALIAAWRVFGPAAAA.

8 helical membrane passes run 21–41 (AGQILAVMIWILLSLAFLLLA), 88–108 (VFLLAPLISFTLAFAAWAVIP), 120–140 (VGILYLFAISSLGVYGIIMGG), 159–179 (MVSYEVSIGFIIITVILLAGS), 208–228 (LPLLLVMVPMAVIFFISGLAE), 267–287 (IVLICAMTTILFFGGWSAPFP), 301–321 (FYYFMWFFLKVIFFFFLVSMA), and 340–360 (VFLPFSLVCVALIAAWRVFGP).

Belongs to the complex I subunit 1 family. As to quaternary structure, NDH-1 is composed of 14 different subunits. Subunits NuoA, H, J, K, L, M, N constitute the membrane sector of the complex.

The protein localises to the cell inner membrane. The catalysed reaction is a quinone + NADH + 5 H(+)(in) = a quinol + NAD(+) + 4 H(+)(out). In terms of biological role, NDH-1 shuttles electrons from NADH, via FMN and iron-sulfur (Fe-S) centers, to quinones in the respiratory chain. The immediate electron acceptor for the enzyme in this species is believed to be ubiquinone. Couples the redox reaction to proton translocation (for every two electrons transferred, four hydrogen ions are translocated across the cytoplasmic membrane), and thus conserves the redox energy in a proton gradient. This subunit may bind ubiquinone. In Phenylobacterium zucineum (strain HLK1), this protein is NADH-quinone oxidoreductase subunit H.